The sequence spans 292 residues: 33 kDa chaperonin (292 aa).

Intrachain disulfides connect C230/C232 and C263/C266.

This sequence belongs to the HSP33 family. In terms of processing, under oxidizing conditions two disulfide bonds are formed involving the reactive cysteines. Under reducing conditions zinc is bound to the reactive cysteines and the protein is inactive.

Its subcellular location is the cytoplasm. Its function is as follows. Redox regulated molecular chaperone. Protects both thermally unfolding and oxidatively damaged proteins from irreversible aggregation. Plays an important role in the bacterial defense system toward oxidative stress. This Salmonella typhimurium (strain LT2 / SGSC1412 / ATCC 700720) protein is 33 kDa chaperonin.